Consider the following 382-residue polypeptide: MMKYELKSTSGMARRGRLTFSRPQGECYVETPAFMPVGTYGTVKGMTPEEVKATGAQILLGNTFHLWLRPGQEIMKMHGDLHDFMQWHGPILTDSGGFQVLSLGKLRKIKEEGVTFQNPISGEKIFLSPEKSMEIQYDLGSDIVMIFDECTPYPATLEYAKKSMEMSLRWAKRSRTRFDELANPRALFGIVQGSTYEELRRESVKGLINIGFDGYAVGGLAVGEPKEEMHRILEFTTPLLPQDKPRYLMGVGKPEDLVEGVRRGIDMFDCVMPTRNARNGHLFVSDGVVKIRNAKYKNDTTPLDAECDCYTCKNYTKAYLYHLDKCGEILGARLNTIHNLRYYQRLMAQIRQAIEQDCFDEFVVEFYAKIGKEVPPLHLKSE.

D94 serves as the catalytic Proton acceptor. Substrate is bound by residues 94-98 (DSGGF), D148, Q192, and G219. Positions 250–256 (GVGKPED) are RNA binding. D269 (nucleophile) is an active-site residue. The segment at 274–278 (TRNAR) is RNA binding; important for wobble base 34 recognition. Zn(2+)-binding residues include C307, C309, C312, and H338.

It belongs to the queuine tRNA-ribosyltransferase family. In terms of assembly, homodimer. Within each dimer, one monomer is responsible for RNA recognition and catalysis, while the other monomer binds to the replacement base PreQ1. It depends on Zn(2+) as a cofactor.

The catalysed reaction is 7-aminomethyl-7-carbaguanine + guanosine(34) in tRNA = 7-aminomethyl-7-carbaguanosine(34) in tRNA + guanine. It functions in the pathway tRNA modification; tRNA-queuosine biosynthesis. Functionally, catalyzes the base-exchange of a guanine (G) residue with the queuine precursor 7-aminomethyl-7-deazaguanine (PreQ1) at position 34 (anticodon wobble position) in tRNAs with GU(N) anticodons (tRNA-Asp, -Asn, -His and -Tyr). Catalysis occurs through a double-displacement mechanism. The nucleophile active site attacks the C1' of nucleotide 34 to detach the guanine base from the RNA, forming a covalent enzyme-RNA intermediate. The proton acceptor active site deprotonates the incoming PreQ1, allowing a nucleophilic attack on the C1' of the ribose to form the product. After dissociation, two additional enzymatic reactions on the tRNA convert PreQ1 to queuine (Q), resulting in the hypermodified nucleoside queuosine (7-(((4,5-cis-dihydroxy-2-cyclopenten-1-yl)amino)methyl)-7-deazaguanosine). The protein is Queuine tRNA-ribosyltransferase of Haemophilus ducreyi (strain 35000HP / ATCC 700724).